Consider the following 84-residue polypeptide: Small ribosomal subunit protein bS18 (84 aa).

Belongs to the bacterial ribosomal protein bS18 family. Part of the 30S ribosomal subunit. Forms a tight heterodimer with protein bS6.

Its function is as follows. Binds as a heterodimer with protein bS6 to the central domain of the 16S rRNA, where it helps stabilize the platform of the 30S subunit. The sequence is that of Small ribosomal subunit protein bS18 from Ruthia magnifica subsp. Calyptogena magnifica.